The chain runs to 201 residues: Anthranilate synthase component 2 (201 aa).

One can recognise a Glutamine amidotransferase type-1 domain in the interval Met1–Glu199. Residue Gly52 to Cys54 participates in L-glutamine binding. Catalysis depends on Cys79, which acts as the Nucleophile; for GATase activity. L-glutamine-binding positions include Gln83 and Ser129–Leu130. Catalysis depends on for GATase activity residues His173 and Glu175.

In terms of assembly, heterotetramer consisting of two non-identical subunits: a beta subunit (TrpG) and a large alpha subunit (TrpE).

The enzyme catalyses chorismate + L-glutamine = anthranilate + pyruvate + L-glutamate + H(+). It functions in the pathway amino-acid biosynthesis; L-tryptophan biosynthesis; L-tryptophan from chorismate: step 1/5. Part of a heterotetrameric complex that catalyzes the two-step biosynthesis of anthranilate, an intermediate in the biosynthesis of L-tryptophan. In the first step, the glutamine-binding beta subunit (TrpG) of anthranilate synthase (AS) provides the glutamine amidotransferase activity which generates ammonia as a substrate that, along with chorismate, is used in the second step, catalyzed by the large alpha subunit of AS (TrpE) to produce anthranilate. In the absence of TrpG, TrpE can synthesize anthranilate directly from chorismate and high concentrations of ammonia. The sequence is that of Anthranilate synthase component 2 from Pseudomonas aeruginosa (strain ATCC 15692 / DSM 22644 / CIP 104116 / JCM 14847 / LMG 12228 / 1C / PRS 101 / PAO1).